Consider the following 61-residue polypeptide: Metallothionein-1A (61 aa).

M1 bears the N-acetylmethionine mark. Residues 1–29 (MDPNCSCATGGSCTCTGSCKCKECKCTSC) are beta. The a divalent metal cation site is built by C5, C7, C13, C15, C19, C21, C24, C26, C29, C33, C34, C36, C37, C41, C44, C48, C50, and C57. The alpha stretch occupies residues 30-61 (KKSCCSCCPMSCAKCAQGCICKGASEKCSCCA). S58 is subject to Phosphoserine. A divalent metal cation is bound by residues C59 and C60.

The protein belongs to the metallothionein superfamily. Type 1 family. In terms of assembly, monomer.

Its function is as follows. Metallothioneins have a high content of cysteine residues that bind various heavy metals; these proteins are transcriptionally regulated by both heavy metals and glucocorticoids. This chain is Metallothionein-1A (MT1A), found in Homo sapiens (Human).